The following is a 954-amino-acid chain: Glycine dehydrogenase (decarboxylating) (954 aa).

Lys-699 carries the N6-(pyridoxal phosphate)lysine modification.

The protein belongs to the GcvP family. The glycine cleavage system is composed of four proteins: P, T, L and H. Requires pyridoxal 5'-phosphate as cofactor.

It carries out the reaction N(6)-[(R)-lipoyl]-L-lysyl-[glycine-cleavage complex H protein] + glycine + H(+) = N(6)-[(R)-S(8)-aminomethyldihydrolipoyl]-L-lysyl-[glycine-cleavage complex H protein] + CO2. Functionally, the glycine cleavage system catalyzes the degradation of glycine. The P protein binds the alpha-amino group of glycine through its pyridoxal phosphate cofactor; CO(2) is released and the remaining methylamine moiety is then transferred to the lipoamide cofactor of the H protein. This is Glycine dehydrogenase (decarboxylating) from Nitrobacter winogradskyi (strain ATCC 25391 / DSM 10237 / CIP 104748 / NCIMB 11846 / Nb-255).